The primary structure comprises 108 residues: uncharacterized protein (108 aa).

This is an uncharacterized protein from Microplitis demolitor bracovirus (isolate Webb) (MdBV).